Here is a 52-residue protein sequence, read N- to C-terminus: Conotoxin Cal6.36 (52 aa).

The signal sequence occupies residues 1 to 22; sequence MKVTCVLTLAVLILTVGQMVTA. Disulfide bonds link C24/C39, C31/C43, and C38/C47.

As to expression, expressed by the venom duct.

It is found in the secreted. Functionally, probable neurotoxin. This chain is Conotoxin Cal6.36, found in Californiconus californicus (California cone).